A 358-amino-acid polypeptide reads, in one-letter code: MDPLRRSPSPCLSSQPSSPSTPPCEMLGPVGIEAVLDQLKIKAMKMGFEFNIMVVGQSGLGKSTMVNTLFKSKVWKSNPPGLGVPTPQTLQLHSLTHVIEEKGVKLKLTVTDTPGFGDQINNDNCWDPILGYINEQYEQYLQEEILITRQRHIPDTRVHCCVYFVPPTGHCLRPLDIEFLQRLCRTVNVVPVIARADSLTMEEREAFRRRIQQNLRTHCIDVYPQMCFDEDINDKILNSKLRDRIPFAVVGADQEHLVNGRCVLGRKTKWGIIEVENMAHCEFPLLRDLLIRSHLQDLKDITHNIHYENYRVIRLNESHLLPRGPGWVNLAPASPGQLTTPRTFKVCRGAHDDSDDEF.

The disordered stretch occupies residues 1-25 (MDPLRRSPSPCLSSQPSSPSTPPCE). Over residues 6–18 (RSPSPCLSSQPSS) the composition is skewed to low complexity. In terms of domain architecture, Septin-type G spans 46–317 (MGFEFNIMVV…ENYRVIRLNE (272 aa)). The segment at 46-319 (MGFEFNIMVV…YRVIRLNESH (274 aa)) is interaction with SEPTIN7. Positions 56-63 (GQSGLGKS) are G1 motif. GTP contacts are provided by residues 56-63 (GQSGLGKS), Thr89, Gly115, 195-203 (RADSLTMEE), Gly251, and Arg266. A G3 motif region spans residues 112–115 (DTPG). Residues 194-197 (ARAD) are G4 motif. A self-association (via N-terminus) to polymerize octameric septin 12-7-6-2/4-2/4-6-7-12 filaments region spans residues 258–358 (VNGRCVLGRK…GAHDDSDDEF (101 aa)).

It belongs to the TRAFAC class TrmE-Era-EngA-EngB-Septin-like GTPase superfamily. Septin GTPase family. As to quaternary structure, septins polymerize into heterooligomeric protein complexes that form filaments, and can associate with cellular membranes, actin filaments and microtubules. GTPase activity is required for filament formation. Interacts with SEPTIN6 and SEPTIN11. Self-associates. Component of a septin core octameric complex consisting of SEPTIN12, SEPTIN7, SEPTIN6 and SEPTIN2 or SEPTIN4 in the order 12-7-6-2-2-6-7-12 or 12-7-6-4-4-6-7-12 and located in the sperm annulus; the octamer polymerizes into filaments via the SEPTIN12 N- and C-termini; the SEPTIN12:SEPTIN7 association is mediated by the respective GTP-binding domains. Interacts with SPAG4 and LMNB1. Associates with alpha- and beta-tubulins. Widely expressed. Expressed in lymph node.

It is found in the cytoplasm. It localises to the cytoskeleton. The protein resides in the spindle. Its subcellular location is the nucleus. The protein localises to the cell projection. It is found in the cilium. It localises to the flagellum. Filament-forming cytoskeletal GTPase. Involved in spermatogenesis. Involved in the morphogenesis of sperm heads and the elongation of sperm tails probably implicating the association with alpha- and beta-tubulins. Forms a filamentous structure with SEPTIN7, SEPTIN6, SEPTIN2 and probably SEPTIN4 at the sperm annulus which is required for the structural integrity and motility of the sperm tail during postmeiotic differentiation. May play a role in cytokinesis (Potential). The polypeptide is Septin-12 (Homo sapiens (Human)).